Reading from the N-terminus, the 193-residue chain is Hydroxyacylglutathione hydrolase-like protein (193 aa).

Zn(2+) is bound by residues His-54, His-56, Asp-58, His-59, and His-110.

This sequence belongs to the metallo-beta-lactamase superfamily. Glyoxalase II family. Zn(2+) is required as a cofactor.

Its function is as follows. Hydrolase acting on ester bonds. This is Hydroxyacylglutathione hydrolase-like protein (HAGHL) from Bos taurus (Bovine).